The following is a 364-amino-acid chain: Spermidine/putrescine import ATP-binding protein PotA (364 aa).

Residues 10 to 244 form the ABC transporter domain; the sequence is IEVVNVSKIF…PAERFVADFI (235 aa). 46 to 53 contributes to the ATP binding site; the sequence is GPSGCGKT.

Belongs to the ABC transporter superfamily. Spermidine/putrescine importer (TC 3.A.1.11.1) family. As to quaternary structure, the complex is composed of two ATP-binding proteins (PotA), two transmembrane proteins (PotB and PotC) and a solute-binding protein (PotD).

Its subcellular location is the cell inner membrane. The catalysed reaction is ATP + H2O + polyamine-[polyamine-binding protein]Side 1 = ADP + phosphate + polyamineSide 2 + [polyamine-binding protein]Side 1.. Its function is as follows. Part of the ABC transporter complex PotABCD involved in spermidine/putrescine import. Responsible for energy coupling to the transport system. This is Spermidine/putrescine import ATP-binding protein PotA from Mesorhizobium japonicum (strain LMG 29417 / CECT 9101 / MAFF 303099) (Mesorhizobium loti (strain MAFF 303099)).